The primary structure comprises 198 residues: Recombination protein RecR (198 aa).

The segment at Cys58 to Cys73 adopts a C4-type zinc-finger fold. A Toprim domain is found at Asn81–Pro175.

It belongs to the RecR family.

In terms of biological role, may play a role in DNA repair. It seems to be involved in an RecBC-independent recombinational process of DNA repair. It may act with RecF and RecO. In Clostridium tetani (strain Massachusetts / E88), this protein is Recombination protein RecR.